We begin with the raw amino-acid sequence, 403 residues long: RNA-binding motif, single-stranded-interacting protein 1 (403 aa).

The interval 30-56 (PAHPMAPPSPSTTSSNNNSSSSSNSGW) is disordered. Residues 40–54 (STTSSNNNSSSSSNS) show a composition bias toward low complexity. RRM domains lie at 62–135 (TNLY…MAKQ) and 141–226 (TNLY…FADG). At T208 the chain carries Phosphothreonine. Over residues 382 to 395 (GQQQVAVETSNDHS) the composition is skewed to polar residues. Residues 382 to 403 (GQQQVAVETSNDHSPYTFPPNK) form a disordered region.

As to expression, ubiquitous. Expressed in all tissues except testis.

The protein localises to the nucleus. Functionally, single-stranded DNA binding protein that interacts with the region upstream of the MYC gene. Binds specifically to the DNA sequence motif 5'-[AT]CT[AT][AT]T-3'. Probably has a role in DNA replication. The polypeptide is RNA-binding motif, single-stranded-interacting protein 1 (Rbms1) (Mus musculus (Mouse)).